The primary structure comprises 222 residues: Exosome complex component Rrp4 (222 aa).

Residues 63 to 131 (NDSVIGKVVD…EVKKVKLGLH (69 aa)) form the S1 motif domain. The KH domain occupies 139-200 (EGGTLAYITP…EIVKRALEMI (62 aa)).

It belongs to the RRP4 family. In terms of assembly, component of the archaeal exosome complex. Forms a trimer of Rrp4 and/or Csl4 subunits. The trimer associates with a hexameric ring-like arrangement composed of 3 Rrp41-Rrp42 heterodimers.

Its subcellular location is the cytoplasm. Its function is as follows. Non-catalytic component of the exosome, which is a complex involved in RNA degradation. Increases the RNA binding and the efficiency of RNA degradation. Confers strong poly(A) specificity to the exosome. This Methanothermus fervidus (strain ATCC 43054 / DSM 2088 / JCM 10308 / V24 S) protein is Exosome complex component Rrp4.